Here is a 462-residue protein sequence, read N- to C-terminus: Light-independent protochlorophyllide reductase subunit N (462 aa).

[4Fe-4S] cluster contacts are provided by Cys-24, Cys-49, and Cys-109.

This sequence belongs to the BchN/ChlN family. In terms of assembly, protochlorophyllide reductase is composed of three subunits; ChlL, ChlN and ChlB. Forms a heterotetramer of two ChlB and two ChlN subunits. [4Fe-4S] cluster is required as a cofactor.

Its subcellular location is the plastid. The protein localises to the chloroplast. The catalysed reaction is chlorophyllide a + oxidized 2[4Fe-4S]-[ferredoxin] + 2 ADP + 2 phosphate = protochlorophyllide a + reduced 2[4Fe-4S]-[ferredoxin] + 2 ATP + 2 H2O. Its pathway is porphyrin-containing compound metabolism; chlorophyll biosynthesis (light-independent). Its function is as follows. Component of the dark-operative protochlorophyllide reductase (DPOR) that uses Mg-ATP and reduced ferredoxin to reduce ring D of protochlorophyllide (Pchlide) to form chlorophyllide a (Chlide). This reaction is light-independent. The NB-protein (ChlN-ChlB) is the catalytic component of the complex. This is Light-independent protochlorophyllide reductase subunit N from Pleurastrum terricola (Filamentous green alga).